We begin with the raw amino-acid sequence, 266 residues long: Luciferase (266 aa).

A helical membrane pass occupies residues Gly22–Ile41.

Belongs to the fungal luciferase family.

The protein localises to the membrane. The enzyme catalyses 3-hydroxyhispidin + O2 = (E)-caffeoylpyruvate + hnu + CO2. It carries out the reaction 3-hydroxyhispidin + O2 = 4-[(E)-2-(3,4-dihydroxyphenyl)ethenyl]-1,7-dihydroxy-2,3,5-trioxabicyclo[2.2.2]oct-7-en-6-one. Functionally, luciferase; part of the gene cluster that mediates the fungal bioluminescence cycle. Uses the fungal luciferin 3-hydroxyhispidin as a substrate to produce an endoperoxide as a high-energy intermediate with decomposition that yields oxyluciferin (also known as caffeoylpyruvate) and light emission. The fungal bioluminescence cycle begins with the hispidin synthetase that catalyzes the formation of hispidin which is further hydroxylated by the hispidin-3-hydroxylase, yielding the fungal luciferin 3-hydroxyhispidin. The luciferase then produces an endoperoxide as a high-energy intermediate with decomposition that yields oxyluciferin and light emission. Oxyluciferin can be recycled to caffeic acid by caffeoylpyruvate hydrolase. The protein is Luciferase of Armillaria ostoyae (Armillaria root rot fungus).